Here is a 478-residue protein sequence, read N- to C-terminus: ATP-dependent DNA helicase RecQ (478 aa).

The Helicase ATP-binding domain maps to 28–202 (IDCLLARRDC…VEGLNLRSPE (175 aa)). 41–48 (LPTGGGKS) lines the ATP pocket. Residues 142 to 145 (DEAH) carry the DEAH box motif. In terms of domain architecture, Helicase C-terminal spans 229 to 380 (QLRRFLLKHL…RAEVLSQQIP (152 aa)). 4 residues coordinate Zn(2+): C447, C467, C470, and C473.

This sequence belongs to the helicase family. RecQ subfamily. The cofactor is Mg(2+). Requires Zn(2+) as cofactor.

The catalysed reaction is Couples ATP hydrolysis with the unwinding of duplex DNA by translocating in the 3'-5' direction.. It carries out the reaction ATP + H2O = ADP + phosphate + H(+). In terms of biological role, an ATP-dependent DNA helicase which unwinds DNA in a 3'-5' direction. The protein is ATP-dependent DNA helicase RecQ of Synechocystis sp. (strain ATCC 27184 / PCC 6803 / Kazusa).